Reading from the N-terminus, the 217-residue chain is Cytochrome c biogenesis ATP-binding export protein CcmA (217 aa).

In terms of domain architecture, ABC transporter spans 16 to 214; sequence LVLEQLSCER…AHGQAEVTEG (199 aa). 48 to 55 is a binding site for ATP; it reads GANGAGKT.

This sequence belongs to the ABC transporter superfamily. CcmA exporter (TC 3.A.1.107) family. In terms of assembly, the complex is composed of two ATP-binding proteins (CcmA) and two transmembrane proteins (CcmB).

The protein resides in the cell inner membrane. It catalyses the reaction heme b(in) + ATP + H2O = heme b(out) + ADP + phosphate + H(+). Its function is as follows. Part of the ABC transporter complex CcmAB involved in the biogenesis of c-type cytochromes; once thought to export heme, this seems not to be the case, but its exact role is uncertain. Responsible for energy coupling to the transport system. This chain is Cytochrome c biogenesis ATP-binding export protein CcmA, found in Alcanivorax borkumensis (strain ATCC 700651 / DSM 11573 / NCIMB 13689 / SK2).